The sequence spans 110 residues: Small ribosomal subunit protein bS16 (110 aa).

Residues 87–110 (ARNNPEKAVPRKERKAAAEAAAKK) form a disordered region.

The protein belongs to the bacterial ribosomal protein bS16 family.

The protein is Small ribosomal subunit protein bS16 of Rhodopseudomonas palustris (strain HaA2).